We begin with the raw amino-acid sequence, 315 residues long: Methionyl-tRNA formyltransferase (315 aa).

Position 113 to 116 (113 to 116) interacts with (6S)-5,6,7,8-tetrahydrofolate; it reads SLLP.

The protein belongs to the Fmt family.

It carries out the reaction L-methionyl-tRNA(fMet) + (6R)-10-formyltetrahydrofolate = N-formyl-L-methionyl-tRNA(fMet) + (6S)-5,6,7,8-tetrahydrofolate + H(+). Its function is as follows. Attaches a formyl group to the free amino group of methionyl-tRNA(fMet). The formyl group appears to play a dual role in the initiator identity of N-formylmethionyl-tRNA by promoting its recognition by IF2 and preventing the misappropriation of this tRNA by the elongation apparatus. The polypeptide is Methionyl-tRNA formyltransferase (Salmonella gallinarum (strain 287/91 / NCTC 13346)).